A 125-amino-acid polypeptide reads, in one-letter code: Holo-[acyl-carrier-protein] synthase (125 aa).

Mg(2+) contacts are provided by Asp8 and Glu57.

This sequence belongs to the P-Pant transferase superfamily. AcpS family. It depends on Mg(2+) as a cofactor.

The protein localises to the cytoplasm. It catalyses the reaction apo-[ACP] + CoA = holo-[ACP] + adenosine 3',5'-bisphosphate + H(+). Transfers the 4'-phosphopantetheine moiety from coenzyme A to a Ser of acyl-carrier-protein. This chain is Holo-[acyl-carrier-protein] synthase, found in Dechloromonas aromatica (strain RCB).